Here is a 153-residue protein sequence, read N- to C-terminus: Transcriptional repressor NrdR (153 aa).

Residues 3–34 (CPYCNADDTKVIDSRLAAEGAQVRRRRQCNQC) fold into a zinc finger. Residues 49–139 (PRIIKSNGRI…VYRDFQDIEA (91 aa)) enclose the ATP-cone domain.

The protein belongs to the NrdR family. It depends on Zn(2+) as a cofactor.

Its function is as follows. Negatively regulates transcription of bacterial ribonucleotide reductase nrd genes and operons by binding to NrdR-boxes. In Psychrobacter sp. (strain PRwf-1), this protein is Transcriptional repressor NrdR.